The following is a 709-amino-acid chain: Tyrosine-protein phosphatase cdc-14 (709 aa).

In terms of domain architecture, Tyrosine-protein phosphatase spans 196 to 354; sequence DFNWIIPGKI…QKFCWSLSQS (159 aa). C295 (phosphocysteine intermediate) is an active-site residue. Residues 366 to 371 carry the Nuclear localization signal motif; the sequence is KRNVRR. Positions 372–381 match the Nuclear export signal motif; it reads LVNQVDDINL. Disordered regions lie at residues 403-541, 573-594, and 628-661; these read VQVQ…LTRT, RYLS…GTSP, and ESKP…PYPS. A compositionally biased stretch (polar residues) spans 404–413; that stretch reads QVQNGRSTAP. Low complexity predominate over residues 463–479; the sequence is TTSPNSSSSRRFVKSST. Polar residues-rich tracts occupy residues 480–490 and 501–521; these read PQMTVPSQAYL and PSKN…TPNG. Residues 526 to 541 are compositionally biased toward low complexity; that stretch reads RTRNSSGNTTSTLTRT. Polar residues predominate over residues 639–649; it reads PGTSKSTSSLK.

The protein belongs to the protein-tyrosine phosphatase family. Non-receptor class CDC14 subfamily.

It is found in the cytoplasm. It localises to the cytoskeleton. Its subcellular location is the microtubule organizing center. The protein localises to the centrosome. The protein resides in the spindle. It is found in the midbody. It localises to the nucleus. The catalysed reaction is O-phospho-L-tyrosyl-[protein] + H2O = L-tyrosyl-[protein] + phosphate. With respect to regulation, inhibited by sodium orthovanadate. Weakly inhibited by sodium fluoride and okadaic acid. Functionally, protein phosphatase that negatively regulates the G1-to-S phase transition to inhibit the cell cycle and establish quiescence in cells of multiple lineages including vulval, hypodermal and intestinal. Promotes nuclear accumulation and activity of the cyclin-dependent kinase inhibitor cki-1 which leads to inhibition of G1 progression during vulval tissue development. Has been shown to not be required for cytokinesis. However, in the embryo, in a contrasting study, has been shown to act as a regulator of central spindle formation and cytokinesis, and may be required for localization of the spindle component zen-4, and its interacting partner air-2 at the spindle during late cell divisions. Main regulator of cell cycle arrest in vulval precursor cells. In Caenorhabditis elegans, this protein is Tyrosine-protein phosphatase cdc-14.